The primary structure comprises 729 residues: Polyribonucleotide nucleotidyltransferase (729 aa).

The tract at residues 399–419 is disordered; it reads YMHNYNFPPYSTGETGRVGSP. Mg(2+) contacts are provided by aspartate 509 and aspartate 515. The region spanning 575–634 is the KH domain; that stretch reads PRVISVKIPVDKIGEVIGPKGKMINQIQADSGAEITVEDDGTIYIGAADGPAAETARSAI. Positions 646 to 718 constitute an S1 motif domain; sequence GERYLGTIVK…ARGKISLAPG (73 aa).

Belongs to the polyribonucleotide nucleotidyltransferase family. Requires Mg(2+) as cofactor.

It is found in the cytoplasm. It carries out the reaction RNA(n+1) + phosphate = RNA(n) + a ribonucleoside 5'-diphosphate. In terms of biological role, involved in mRNA degradation. Catalyzes the phosphorolysis of single-stranded polyribonucleotides processively in the 3'- to 5'-direction. The chain is Polyribonucleotide nucleotidyltransferase from Parafrankia sp. (strain EAN1pec).